A 76-amino-acid chain; its full sequence is Large ribosomal subunit protein uL29 (76 aa).

This sequence belongs to the universal ribosomal protein uL29 family.

The chain is Large ribosomal subunit protein uL29 from Corynebacterium glutamicum (strain R).